A 495-amino-acid polypeptide reads, in one-letter code: Glycogen synthase (495 aa).

Lysine 15 contacts ADP-alpha-D-glucose.

This sequence belongs to the glycosyltransferase 1 family. Bacterial/plant glycogen synthase subfamily.

It carries out the reaction [(1-&gt;4)-alpha-D-glucosyl](n) + ADP-alpha-D-glucose = [(1-&gt;4)-alpha-D-glucosyl](n+1) + ADP + H(+). Its pathway is glycan biosynthesis; glycogen biosynthesis. Functionally, synthesizes alpha-1,4-glucan chains using ADP-glucose. This is Glycogen synthase from Variovorax paradoxus (strain S110).